Consider the following 338-residue polypeptide: Glycerol-3-phosphate dehydrogenase [NAD(P)+] (338 aa).

The NADPH site is built by serine 13, tryptophan 14, and lysine 108. Residues lysine 108, glycine 139, and serine 141 each contribute to the sn-glycerol 3-phosphate site. Alanine 143 is a binding site for NADPH. Sn-glycerol 3-phosphate is bound by residues lysine 194, aspartate 247, serine 257, arginine 258, and asparagine 259. Catalysis depends on lysine 194, which acts as the Proton acceptor. Arginine 258 is a binding site for NADPH. Positions 282 and 284 each coordinate NADPH.

The protein belongs to the NAD-dependent glycerol-3-phosphate dehydrogenase family.

It is found in the cytoplasm. The enzyme catalyses sn-glycerol 3-phosphate + NAD(+) = dihydroxyacetone phosphate + NADH + H(+). It carries out the reaction sn-glycerol 3-phosphate + NADP(+) = dihydroxyacetone phosphate + NADPH + H(+). It participates in membrane lipid metabolism; glycerophospholipid metabolism. In terms of biological role, catalyzes the reduction of the glycolytic intermediate dihydroxyacetone phosphate (DHAP) to sn-glycerol 3-phosphate (G3P), the key precursor for phospholipid synthesis. The sequence is that of Glycerol-3-phosphate dehydrogenase [NAD(P)+] from Streptococcus gordonii (strain Challis / ATCC 35105 / BCRC 15272 / CH1 / DL1 / V288).